Here is a 1439-residue protein sequence, read N- to C-terminus: Receptor-type tyrosine-protein phosphatase kappa (1439 aa).

A signal peptide spans methionine 1–serine 26. Residues alanine 27 to lysine 752 lie on the Extracellular side of the membrane. In terms of domain architecture, MAM spans phenylalanine 31–lysine 194. N-linked (GlcNAc...) asparagine glycosylation is found at asparagine 101, asparagine 140, and asparagine 211. The region spanning proline 196–serine 281 is the Ig-like C2-type domain. The cysteines at positions 216 and 270 are disulfide-linked. Fibronectin type-III domains lie at proline 294 to proline 389, threonine 392 to aspartate 488, glycine 491 to threonine 595, and proline 597 to proline 680. N-linked (GlcNAc...) asparagine glycans are attached at residues asparagine 416, asparagine 424, asparagine 436, asparagine 462, asparagine 552, asparagine 586, asparagine 590, asparagine 607, and asparagine 690. The chain crosses the membrane as a helical span at residues isoleucine 753 to valine 774. Residues lysine 775–serine 1439 lie on the Cytoplasmic side of the membrane. Serine 856 is subject to Phosphoserine. Tyrosine-protein phosphatase domains are found at residues phenylalanine 887 to alanine 1141 and leucine 1173 to tyrosine 1435. Residues aspartate 1050, cysteine 1082–arginine 1088, and glutamine 1126 contribute to the substrate site. Cysteine 1082 (phosphocysteine intermediate) is an active-site residue. Cysteine 1376 functions as the Phosphocysteine intermediate in the catalytic mechanism.

The protein belongs to the protein-tyrosine phosphatase family. Receptor class 2B subfamily. In terms of processing, this protein undergoes proteolytic processing. As to expression, high levels in lung, brain and colon; less in liver, pancreas, stomach, kidney, placenta and mammary carcinoma.

The protein localises to the cell junction. It localises to the adherens junction. Its subcellular location is the cell membrane. The catalysed reaction is O-phospho-L-tyrosyl-[protein] + H2O = L-tyrosyl-[protein] + phosphate. Regulation of processes involving cell contact and adhesion such as growth control, tumor invasion, and metastasis. Negative regulator of EGFR signaling pathway. Forms complexes with beta-catenin and gamma-catenin/plakoglobin. Beta-catenin may be a substrate for the catalytic activity of PTPRK/PTP-kappa. The sequence is that of Receptor-type tyrosine-protein phosphatase kappa (PTPRK) from Homo sapiens (Human).